We begin with the raw amino-acid sequence, 179 residues long: Protein GrpE (179 aa).

Basic and acidic residues predominate over residues 1–10; it reads MSKKEEKQEE. Positions 1-23 are disordered; sequence MSKKEEKQEELQEEMEAVDAAGV.

The protein belongs to the GrpE family. In terms of assembly, homodimer.

It is found in the cytoplasm. In terms of biological role, participates actively in the response to hyperosmotic and heat shock by preventing the aggregation of stress-denatured proteins, in association with DnaK and GrpE. It is the nucleotide exchange factor for DnaK and may function as a thermosensor. Unfolded proteins bind initially to DnaJ; upon interaction with the DnaJ-bound protein, DnaK hydrolyzes its bound ATP, resulting in the formation of a stable complex. GrpE releases ADP from DnaK; ATP binding to DnaK triggers the release of the substrate protein, thus completing the reaction cycle. Several rounds of ATP-dependent interactions between DnaJ, DnaK and GrpE are required for fully efficient folding. This is Protein GrpE from Enterococcus faecalis (strain ATCC 700802 / V583).